The following is a 143-amino-acid chain: ATP synthase F(0) complex subunit C2, mitochondrial (143 aa).

The transit peptide at 1 to 68 (MYTCAKFVST…RSFQTSAISR (68 aa)) directs the protein to the mitochondrion. A helical transmembrane segment spans residues 84–104 (VGVAGSGAGIGTVFGSLIIGY). K111 carries the N6,N6,N6-trimethyllysine modification. A helical transmembrane segment spans residues 119-139 (ILGFALSEAMGLFCLMVAFLI).

It belongs to the ATPase C chain family. In terms of assembly, F-type ATPases have 2 components, CF(1) - the catalytic core - and CF(0) - the membrane proton channel. CF(1) has five subunits: alpha(3), beta(3), gamma(1), delta(1), epsilon(1). CF(0) has three main subunits: a, b and c. Interacts with DNAJC30; interaction is direct. In terms of processing, trimethylated by ATPSCKMT at Lys-111. Methylation is required for proper incorporation of the C subunit into the ATP synthase complex and mitochondrial respiration.

The protein localises to the mitochondrion membrane. Mitochondrial membrane ATP synthase (F(1)F(0) ATP synthase or Complex V) produces ATP from ADP in the presence of a proton gradient across the membrane which is generated by electron transport complexes of the respiratory chain. F-type ATPases consist of two structural domains, F(1) - containing the extramembraneous catalytic core and F(0) - containing the membrane proton channel, linked together by a central stalk and a peripheral stalk. During catalysis, ATP synthesis in the catalytic domain of F(1) is coupled via a rotary mechanism of the central stalk subunits to proton translocation. Part of the complex F(0) domain. A homomeric c-ring of probably 10 subunits is part of the complex rotary element. This is ATP synthase F(0) complex subunit C2, mitochondrial from Ovis aries (Sheep).